A 498-amino-acid chain; its full sequence is ATP synthase subunit beta, chloroplastic (498 aa).

Residue 172–179 participates in ATP binding; it reads GGAGVGKT.

The protein belongs to the ATPase alpha/beta chains family. In terms of assembly, F-type ATPases have 2 components, CF(1) - the catalytic core - and CF(0) - the membrane proton channel. CF(1) has five subunits: alpha(3), beta(3), gamma(1), delta(1), epsilon(1). CF(0) has four main subunits: a(1), b(1), b'(1) and c(9-12).

The protein localises to the plastid. It is found in the chloroplast thylakoid membrane. It catalyses the reaction ATP + H2O + 4 H(+)(in) = ADP + phosphate + 5 H(+)(out). In terms of biological role, produces ATP from ADP in the presence of a proton gradient across the membrane. The catalytic sites are hosted primarily by the beta subunits. In Eucalyptus globulus subsp. globulus (Tasmanian blue gum), this protein is ATP synthase subunit beta, chloroplastic.